The sequence spans 82 residues: Small ribosomal subunit protein bS16 (82 aa).

It belongs to the bacterial ribosomal protein bS16 family.

The chain is Small ribosomal subunit protein bS16 from Salmonella agona (strain SL483).